A 692-amino-acid chain; its full sequence is ABC transporter F family member 5 (692 aa).

The interval 64-95 (EIESLFSKQPSQQDSDRKRNGKSSKNGASGIS) is disordered. The segment covering 86–95 (SSKNGASGIS) has biased composition (polar residues). ABC transporter domains are found at residues 98 to 356 (VKLE…ETQN) and 425 to 640 (VNVK…TKEL). Residues 130-137 (GVNGAGKT) and 457-464 (GPNGCGKS) each bind ATP. The tract at residues 644–692 (AELEEKAPKVKAKSKMSKAEKEARKKQKMQAFQQAKQKSKASKNSKRWN) is disordered. Over residues 680 to 692 (QKSKASKNSKRWN) the composition is skewed to basic residues.

The protein belongs to the ABC transporter superfamily. ABCF family. EF3 (TC 3.A.1.121) subfamily.

This is ABC transporter F family member 5 (ABCF5) from Arabidopsis thaliana (Mouse-ear cress).